The primary structure comprises 318 residues: WRKY transcription factor 28 (318 aa).

Polar residues-rich tracts occupy residues 74–84 and 106–115; these read SSEVFNSSIDQ and RVSPSNSSSS. A disordered region spans residues 74-158; it reads SSEVFNSSID…KTEVKKQREP (85 aa). 2 stretches are compositionally biased toward basic and acidic residues: residues 116–126 and 148–158; these read EADHPGEDSGK and KKTEVKKQREP. Positions 166–231 form a DNA-binding region, WRKY; sequence SEVDHLEDGY…YEGQHNHPIP (66 aa).

It belongs to the WRKY group II-c family.

Its subcellular location is the nucleus. Functionally, transcription factor. Interacts specifically with the W box (5'-(T)TGAC[CT]-3'), a frequently occurring elicitor-responsive cis-acting element. The polypeptide is WRKY transcription factor 28 (WRKY28) (Arabidopsis thaliana (Mouse-ear cress)).